Here is an 89-residue protein sequence, read N- to C-terminus: Snake venom serine protease rhinocerase (89 aa).

Residues 1-89 (VIGGAECDIN…KVFDYIPWIK (89 aa)) enclose the Peptidase S1 domain. The Charge relay system role is filled by aspartate 45. Cysteine 64 and cysteine 69 are joined by a disulfide.

This sequence belongs to the peptidase S1 family. Snake venom subfamily. Glycosylated. Expressed by the venom gland.

It is found in the secreted. Its activity is regulated as follows. Inhibited by PMSF. Not inhibited by benzamidine. Its function is as follows. Snake venom serine protease that cleaves fibrinogen alpha and beta chains (FGA and FGB), but not gamma chains. Exhibits fibrinolytic and kininogenolytic. Preferentially cleaves after Arg and Lys residues. This chain is Snake venom serine protease rhinocerase, found in Bitis rhinoceros (West African gaboon viper).